Consider the following 611-residue polypeptide: Dolabella-3,7-dien-18-ol synthase TPS06 (611 aa).

Positions 363, 367, 507, 511, and 515 each coordinate Mg(2+). A DDXXD motif; degenerate motif is present at residues 363–367; that stretch reads DNTFD.

This sequence belongs to the terpene synthase family. Tpsa subfamily. Mg(2+) serves as cofactor. The cofactor is Mn(2+). Predominantly expressed in flowers but also in stems, siliques, roots and leaves.

Its subcellular location is the cytoplasm. The catalysed reaction is (2E,6E,10E)-geranylgeranyl diphosphate + H2O = (3E,7E)-dolabella-3,7-dien-18-ol + diphosphate. Its pathway is secondary metabolite biosynthesis; terpenoid biosynthesis. Involved in terpene biosynthesis in roots. Possesses sesquiterpene (C15) synthase activity and diterpene (C20) synthase activity in vitro. Possesses dolabella-3,7-dien-18-ol synthase activity in vitro. Catalyzes the formation of dolabella-3,7-dien-18-ol from geranylgeranyl diphosphate. In Arabidopsis thaliana (Mouse-ear cress), this protein is Dolabella-3,7-dien-18-ol synthase TPS06.